The primary structure comprises 946 residues: Alanine--tRNA ligase, cytoplasmic (946 aa).

Zn(2+) contacts are provided by His591, His595, Cys710, and His714.

It belongs to the class-II aminoacyl-tRNA synthetase family. As to quaternary structure, monomer. Zn(2+) is required as a cofactor.

It localises to the cytoplasm. The catalysed reaction is tRNA(Ala) + L-alanine + ATP = L-alanyl-tRNA(Ala) + AMP + diphosphate. In terms of biological role, catalyzes the attachment of alanine to tRNA(Ala) in a two-step reaction: alanine is first activated by ATP to form Ala-AMP and then transferred to the acceptor end of tRNA(Ala). Also edits incorrectly charged tRNA(Ala) via its editing domain. This chain is Alanine--tRNA ligase, cytoplasmic (alaS), found in Dictyostelium discoideum (Social amoeba).